Reading from the N-terminus, the 512-residue chain is NADH-quinone oxidoreductase subunit N 2 (512 aa).

The next 14 helical transmembrane spans lie at 23 to 43 (AFVP…IDLF), 50 to 70 (TIIP…VYLQ), 88 to 108 (FAIF…LISI), 120 to 140 (SLGE…LMAS), 144 to 164 (LLMM…LVGY), 179 to 199 (VIYG…IYGL), 220 to 240 (ITLM…AGVV), 254 to 274 (PTPI…AMLI), 295 to 315 (WVTL…VVAL), 323 to 343 (LLAY…IVAD), 351 to 371 (LFYL…IILI), 394 to 414 (AASL…VGFI), 429 to 449 (VFVW…YFYF), and 477 to 497 (LVAF…PLSV).

The protein belongs to the complex I subunit 2 family. As to quaternary structure, NDH-1 is composed of 14 different subunits. Subunits NuoA, H, J, K, L, M, N constitute the membrane sector of the complex.

It localises to the cell inner membrane. The catalysed reaction is a quinone + NADH + 5 H(+)(in) = a quinol + NAD(+) + 4 H(+)(out). Its function is as follows. NDH-1 shuttles electrons from NADH, via FMN and iron-sulfur (Fe-S) centers, to quinones in the respiratory chain. The immediate electron acceptor for the enzyme in this species is believed to be a menaquinone. Couples the redox reaction to proton translocation (for every two electrons transferred, four hydrogen ions are translocated across the cytoplasmic membrane), and thus conserves the redox energy in a proton gradient. The polypeptide is NADH-quinone oxidoreductase subunit N 2 (Chloroherpeton thalassium (strain ATCC 35110 / GB-78)).